The sequence spans 338 residues: MSKPIVLSGVQPSGELSIGNYLGALRQWQQMQDDYDCQYCVVDLHAITVRQDPKALHEATLDALAICLAVGVDPKKSTLFVQSHVPEHAQLGWLLNCYTQMGELSRMTQFKDKSARYANDVNVGLFGYPVLMAADILLYGAHQVPVGSDQKQHLELARDIATRFNNIYSPENPIFTIPEPYIPTVNARVMSLQDATKKMSKSDDNRKNVITLLEDPKSIIKKINKAQTDTETPPRIAHDWDNKAGISNLMGLYSAATGMSFEEIEAKYQGVEMYGPFKKDVGEALVAMLEPIQAEYHRIREDRGYMNEVMRQGADKASARAAETLKKVYEVVGFVGRP.

ATP-binding positions include 11–13 and 19–20; these read QPS and GN. Positions 12–20 match the 'HIGH' region motif; the sequence is PSGELSIGN. D135 is an L-tryptophan binding site. Residues 147–149, V189, and 198–202 contribute to the ATP site; these read GSD and KMSKS. The short motif at 198–202 is the 'KMSKS' region element; it reads KMSKS.

This sequence belongs to the class-I aminoacyl-tRNA synthetase family. As to quaternary structure, homodimer.

The protein resides in the cytoplasm. The catalysed reaction is tRNA(Trp) + L-tryptophan + ATP = L-tryptophyl-tRNA(Trp) + AMP + diphosphate + H(+). In terms of biological role, catalyzes the attachment of tryptophan to tRNA(Trp). The chain is Tryptophan--tRNA ligase from Vibrio vulnificus (strain YJ016).